The chain runs to 118 residues: Nucleoid-associated protein TM_0687 (118 aa).

Belongs to the YbaB/EbfC family. As to quaternary structure, homodimer.

The protein localises to the cytoplasm. It localises to the nucleoid. Its function is as follows. Binds to DNA and alters its conformation. May be involved in regulation of gene expression, nucleoid organization and DNA protection. In Thermotoga maritima (strain ATCC 43589 / DSM 3109 / JCM 10099 / NBRC 100826 / MSB8), this protein is Nucleoid-associated protein TM_0687.